The following is a 502-amino-acid chain: Lysine--tRNA ligase (502 aa).

Residues Glu-398 and Glu-405 each coordinate Mg(2+).

The protein belongs to the class-II aminoacyl-tRNA synthetase family. In terms of assembly, homodimer. Requires Mg(2+) as cofactor.

The protein localises to the cytoplasm. The catalysed reaction is tRNA(Lys) + L-lysine + ATP = L-lysyl-tRNA(Lys) + AMP + diphosphate. The protein is Lysine--tRNA ligase of Thermosipho africanus (strain TCF52B).